We begin with the raw amino-acid sequence, 207 residues long: Suppressor of IKBKE 1 (207 aa).

Coiled-coil stretches lie at residues 70-102 (HILLSQENTQIRDLQQENRELWISLEEHQDALE) and 162-193 (QFCKIQEKLAQLELENKELRELLSISSESLQA).

Belongs to the SIKE family. Interacts with IKBKE and TBK1 via its coiled coil region. Interaction with TBK1 is disrupted upon viral infection or TLR3 stimulation. Interacts with CDC42BPB. Interacts with SIKE1 which mediates association with the STRIPAK core complex composed of PP2A catalytic and scaffolding subunits, the striatins (PP2A regulatory subunits), the striatin-associated proteins MOB4, STRIP1 and STRIP2, PDCD10 and members of the STE20 kinases, such as STK24 and STK26. Widely expressed. Expressed in brain, heart, skeletal muscle, colon, thymus, spleen, kidney, liver, small intestine, placenta, lung and leukocytes. Present in all cell lines tested (at protein level).

Its subcellular location is the cytoplasm. Physiological suppressor of IKK-epsilon and TBK1 that plays an inhibitory role in virus- and TLR3-triggered IRF3. Inhibits TLR3-mediated activation of interferon-stimulated response elements (ISRE) and the IFN-beta promoter. May act by disrupting the interactions of IKBKE or TBK1 with TICAM1/TRIF, IRF3 and RIGI. Does not inhibit NF-kappa-B activation pathways. Associates with the striatin-interacting phosphatase and kinase (STRIPAK) core complex, forming the extended (SIKE1:SLMAP)STRIPAK complex. The (SIKE1:SLMAP)STRIPAK complex dephosphorylates STK3 leading to the inhibition of Hippo signaling and the control of cell growth. The polypeptide is Suppressor of IKBKE 1 (Homo sapiens (Human)).